A 249-amino-acid polypeptide reads, in one-letter code: 2-C-methyl-D-erythritol 4-phosphate cytidylyltransferase (249 aa).

This sequence belongs to the IspD/TarI cytidylyltransferase family. IspD subfamily.

The enzyme catalyses 2-C-methyl-D-erythritol 4-phosphate + CTP + H(+) = 4-CDP-2-C-methyl-D-erythritol + diphosphate. It functions in the pathway isoprenoid biosynthesis; isopentenyl diphosphate biosynthesis via DXP pathway; isopentenyl diphosphate from 1-deoxy-D-xylulose 5-phosphate: step 2/6. Catalyzes the formation of 4-diphosphocytidyl-2-C-methyl-D-erythritol from CTP and 2-C-methyl-D-erythritol 4-phosphate (MEP). This Shewanella oneidensis (strain ATCC 700550 / JCM 31522 / CIP 106686 / LMG 19005 / NCIMB 14063 / MR-1) protein is 2-C-methyl-D-erythritol 4-phosphate cytidylyltransferase.